Consider the following 737-residue polypeptide: Catalase-peroxidase 2 (737 aa).

The disordered stretch occupies residues 1–33 (MPEATEHPPIGEAQTEPAQSGCPMVIKPPVEGG). Residues 107–235 (WHAAGTYRVQ…LGASHMGLIY (129 aa)) constitute a cross-link (tryptophyl-tyrosyl-methioninium (Trp-Tyr) (with M-261)). The Proton acceptor role is filled by histidine 108. Residues 235 to 261 (YVNPEGPEGNPDPIAAAIDIRETFGRM) constitute a cross-link (tryptophyl-tyrosyl-methioninium (Tyr-Met) (with W-107)). Histidine 276 serves as a coordination point for heme.

It belongs to the peroxidase family. Peroxidase/catalase subfamily. As to quaternary structure, homodimer or homotetramer. The cofactor is heme b. In terms of processing, formation of the three residue Trp-Tyr-Met cross-link is important for the catalase, but not the peroxidase activity of the enzyme.

It carries out the reaction H2O2 + AH2 = A + 2 H2O. The catalysed reaction is 2 H2O2 = O2 + 2 H2O. Bifunctional enzyme with both catalase and broad-spectrum peroxidase activity. This chain is Catalase-peroxidase 2, found in Mycolicibacterium vanbaalenii (strain DSM 7251 / JCM 13017 / BCRC 16820 / KCTC 9966 / NRRL B-24157 / PYR-1) (Mycobacterium vanbaalenii).